A 192-amino-acid chain; its full sequence is Ras-like GTP-binding protein rhoA (192 aa).

12–19 provides a ligand contact to GTP; sequence GDGACGKT. The short motif at 34–42 is the Effector region element; that stretch reads YVPTVFENY. Residues 59–63 and 117–120 each bind GTP; these read DTAGQ and NKRD. Cysteine methyl ester is present on C189. The S-geranylgeranyl cysteine moiety is linked to residue C189. The propeptide at 190-192 is removed in mature form; the sequence is MIL.

This sequence belongs to the small GTPase superfamily. Rho family. In terms of assembly, may interact with unc-89 (via DN and PH domains). Interacts with bli-3 and memo-1. In larvae and adults, enriched at the tip of the head where the anterior sensory organ is located and in the pharyngeal nerve ring (at protein level). In embryos, enriched at the boundaries of dorsal cells undergoing intercalation, ventral enclosure and elongation.

It is found in the cell membrane. The protein localises to the cytoplasm. Its subcellular location is the cytoskeleton. The protein resides in the cell cortex. With respect to regulation, GTP hydrolysis is stimulated by unc-89. Required for ventral migration of epidermal cells during ventral enclosure in the embryo and for cell elongation. Also required for ventral migration of P cells during larval development. Involved in asymmetric spindle positioning during anaphase and establishment of cell polarity during embryo development. In adults, involved in regulation of multiple processes including locomotion, pharyngeal pumping, fecundity, ovulation, defecation and body morphology. In body wall muscles, regulates organization of myosin thick filaments downstream of unc-89. Association with the oxidase bli-3 promotes ROS production and this interaction may be modulated by memo-1, in order to control the oxidative stress response and longevity. In Caenorhabditis elegans, this protein is Ras-like GTP-binding protein rhoA.